Reading from the N-terminus, the 611-residue chain is UvrABC system protein C (611 aa).

The 79-residue stretch at 19 to 97 (QRPGVYRMVD…IKELRPRYNV (79 aa)) folds into the GIY-YIG domain. Residues 207-242 (NQVIEELGARMEAASERLEFEAAAQYRDRIQALQAV) form the UVR domain.

This sequence belongs to the UvrC family. Interacts with UvrB in an incision complex.

The protein localises to the cytoplasm. Functionally, the UvrABC repair system catalyzes the recognition and processing of DNA lesions. UvrC both incises the 5' and 3' sides of the lesion. The N-terminal half is responsible for the 3' incision and the C-terminal half is responsible for the 5' incision. In Alkalilimnicola ehrlichii (strain ATCC BAA-1101 / DSM 17681 / MLHE-1), this protein is UvrABC system protein C.